The primary structure comprises 138 residues: NADH-quinone oxidoreductase subunit A 1 (138 aa).

3 helical membrane passes run 19–39, 74–94, and 103–123; these read FLPL…LLLA, FYLI…IFAW, and LAGL…LVWL.

It belongs to the complex I subunit 3 family. As to quaternary structure, NDH-1 is composed of 14 different subunits. Subunits NuoA, H, J, K, L, M, N constitute the membrane sector of the complex.

It localises to the cell inner membrane. It carries out the reaction a quinone + NADH + 5 H(+)(in) = a quinol + NAD(+) + 4 H(+)(out). NDH-1 shuttles electrons from NADH, via FMN and iron-sulfur (Fe-S) centers, to quinones in the respiratory chain. The immediate electron acceptor for the enzyme in this species is believed to be ubiquinone. Couples the redox reaction to proton translocation (for every two electrons transferred, four hydrogen ions are translocated across the cytoplasmic membrane), and thus conserves the redox energy in a proton gradient. This is NADH-quinone oxidoreductase subunit A 1 from Geobacter metallireducens (strain ATCC 53774 / DSM 7210 / GS-15).